Here is a 124-residue protein sequence, read N- to C-terminus: Holo-[acyl-carrier-protein] synthase (124 aa).

The Mg(2+) site is built by Asp-8 and Glu-60.

Belongs to the P-Pant transferase superfamily. AcpS family. The cofactor is Mg(2+).

The protein localises to the cytoplasm. It carries out the reaction apo-[ACP] + CoA = holo-[ACP] + adenosine 3',5'-bisphosphate + H(+). Transfers the 4'-phosphopantetheine moiety from coenzyme A to a Ser of acyl-carrier-protein. The polypeptide is Holo-[acyl-carrier-protein] synthase (Wolbachia pipientis subsp. Culex pipiens (strain wPip)).